The chain runs to 215 residues: UPF0173 metal-dependent hydrolase NEQ378 (215 aa).

The protein belongs to the UPF0173 family.

This chain is UPF0173 metal-dependent hydrolase NEQ378, found in Nanoarchaeum equitans (strain Kin4-M).